The sequence spans 420 residues: CinA-like protein (420 aa).

It belongs to the CinA family.

This Geotalea uraniireducens (strain Rf4) (Geobacter uraniireducens) protein is CinA-like protein.